Consider the following 481-residue polypeptide: Endoplasmic reticulum lectin 1 (481 aa).

An N-terminal signal peptide occupies residues 1–27 (MRRSDRLRCAGASLLVVLCGVFRSSFG). MRH domains follow at residues 108–245 (SSCS…LCNH) and 340–467 (SYCF…ICKI). Cystine bridges form between Cys110–Cys123, Cys198–Cys231, Cys214–Cys243, Cys342–Cys355, Cys419–Cys453, and Cys434–Cys465.

Its subcellular location is the endoplasmic reticulum lumen. Functionally, probable lectin that binds selectively to improperly folded lumenal proteins. May function in endoplasmic reticulum quality control and endoplasmic reticulum-associated degradation (ERAD) of both non-glycosylated proteins and glycoproteins. This Xenopus tropicalis (Western clawed frog) protein is Endoplasmic reticulum lectin 1 (erlec1).